A 416-amino-acid polypeptide reads, in one-letter code: Isobutyryl-CoA dehydrogenase, mitochondrial (416 aa).

Residues 1–21 (MISGLFKLSNKQSVLQNATKL) constitute a mitochondrion transit peptide. Residues 156-165 (YCLTEPGSGS) and 189-191 (FIS) each bind FAD. Residue Ser165 coordinates substrate. Residue 273–276 (NGGR) coordinates substrate. Residues Arg301, 311-312 (FQ), and 370-374 (QLFGG) each bind FAD. The active-site Proton acceptor is Glu397. 399 to 401 (SDA) contributes to the FAD binding site. A substrate-binding site is contributed by Arg409.

The protein belongs to the acyl-CoA dehydrogenase family. In terms of assembly, homotetramer. It depends on FAD as a cofactor.

It is found in the mitochondrion. The enzyme catalyses 2-methylpropanoyl-CoA + oxidized [electron-transfer flavoprotein] + H(+) = 2-methylpropenoyl-CoA + reduced [electron-transfer flavoprotein]. The catalysed reaction is (2S)-2-methylbutanoyl-CoA + oxidized [electron-transfer flavoprotein] + H(+) = (2E)-2-methylbut-2-enoyl-CoA + reduced [electron-transfer flavoprotein]. It catalyses the reaction propanoyl-CoA + oxidized [electron-transfer flavoprotein] + H(+) = acryloyl-CoA + reduced [electron-transfer flavoprotein]. It functions in the pathway amino-acid degradation; L-valine degradation. In terms of biological role, isobutyryl-CoA dehydrogenase which catalyzes one of the steps of the valine catabolic pathway. To a lesser extent, is also able to catalyze the oxidation of (2S)-2-methylbutanoyl-CoA. This chain is Isobutyryl-CoA dehydrogenase, mitochondrial (acad8), found in Dictyostelium discoideum (Social amoeba).